We begin with the raw amino-acid sequence, 880 residues long: Alanine--tRNA ligase (880 aa).

Zn(2+) contacts are provided by His567, His571, Cys669, and His673.

This sequence belongs to the class-II aminoacyl-tRNA synthetase family. The cofactor is Zn(2+).

It localises to the cytoplasm. It catalyses the reaction tRNA(Ala) + L-alanine + ATP = L-alanyl-tRNA(Ala) + AMP + diphosphate. Catalyzes the attachment of alanine to tRNA(Ala) in a two-step reaction: alanine is first activated by ATP to form Ala-AMP and then transferred to the acceptor end of tRNA(Ala). Also edits incorrectly charged Ser-tRNA(Ala) and Gly-tRNA(Ala) via its editing domain. The chain is Alanine--tRNA ligase from Bacillus cytotoxicus (strain DSM 22905 / CIP 110041 / 391-98 / NVH 391-98).